The chain runs to 150 residues: Macrodomain Ter protein (150 aa).

Belongs to the MatP family. Homodimer.

The protein resides in the cytoplasm. Required for spatial organization of the terminus region of the chromosome (Ter macrodomain) during the cell cycle. Prevents early segregation of duplicated Ter macrodomains during cell division. Binds specifically to matS, which is a 13 bp signature motif repeated within the Ter macrodomain. The sequence is that of Macrodomain Ter protein from Erwinia tasmaniensis (strain DSM 17950 / CFBP 7177 / CIP 109463 / NCPPB 4357 / Et1/99).